Consider the following 143-residue polypeptide: Transcriptional regulator MraZ (143 aa).

SpoVT-AbrB domains lie at 5-47 and 76-119; these read TFTP…PKAE and ADEQ…DAES.

Belongs to the MraZ family. As to quaternary structure, forms oligomers.

Its subcellular location is the cytoplasm. It is found in the nucleoid. The protein is Transcriptional regulator MraZ of Corynebacterium jeikeium (strain K411).